Reading from the N-terminus, the 542-residue chain is Major facilitator superfamily domain-containing protein 6-like (542 aa).

The next 11 helical transmembrane spans lie at 46–66, 89–109, 198–218, 246–266, 272–292, 321–341, 352–372, 381–401, 404–424, 444–464, and 469–489; these read LGLSAAMIGIIMASKHLLALL, LLSSALVVLPLLLFPSAGILV, MFFLVLLVTALWEFVAVPLEW, VGAAFGSCLVGVLVTNLFCRI, FYSYTVLMILTVPASALLPIY, VTVILTGMVTSAVSDFLLWLM, GICLALAHLSHTGFSPIAGPL, WMLVLAVVGLAMQCLYYSFLW, WAVMPAQLLAGFSTGALWWSV, FEAFSLDMGAALGSLIAGFVV, and VNVLFQGASVMLAVWSSALAV.

It belongs to the major facilitator superfamily. MFSD6 family.

The protein resides in the membrane. In Danio rerio (Zebrafish), this protein is Major facilitator superfamily domain-containing protein 6-like (mfsd6l).